The primary structure comprises 253 residues: Ribonuclease HII (253 aa).

Residues N70–L253 enclose the RNase H type-2 domain. A divalent metal cation is bound by residues D76, E77, and D168.

This sequence belongs to the RNase HII family. Mn(2+) serves as cofactor. Mg(2+) is required as a cofactor.

The protein localises to the cytoplasm. The catalysed reaction is Endonucleolytic cleavage to 5'-phosphomonoester.. Its function is as follows. Endonuclease that specifically degrades the RNA of RNA-DNA hybrids. The protein is Ribonuclease HII of Streptococcus agalactiae serotype Ia (strain ATCC 27591 / A909 / CDC SS700).